A 323-amino-acid polypeptide reads, in one-letter code: MTRRAVVIGAGHYLPDRIVENAEFEATLDTSDEWIRSRSGIERRHFAAEGETTSHMATRAAEAALKSAGRSADDVDAIVLATSTADLTFPSAATMVQSQLGMTKGFAFDVQAVCAGFVYALSNANALIASGQADRVLVIGAETFSRIMDWTDRSTCVLFGDGAGALLLEAQEGEGTSKDRGILATDLNSDGRYKDLLYVDGGVSTQSTGYLRMQGNQVFRHAVEKLASTAHTALERAGASTDEVDWIVPHQANIRIIQGTAKKMGLPMDKVVVTVQDHGNTSAASIPLALSVGVERGQIKPGDLIVTEAIGGGLAWGAVVLRW.

Residues cysteine 114 and histidine 250 contribute to the active site. The interval 251–255 is ACP-binding; sequence QANIR. Asparagine 280 is an active-site residue.

Belongs to the thiolase-like superfamily. FabH family. As to quaternary structure, homodimer.

The protein resides in the cytoplasm. The enzyme catalyses malonyl-[ACP] + acetyl-CoA + H(+) = 3-oxobutanoyl-[ACP] + CO2 + CoA. It functions in the pathway lipid metabolism; fatty acid biosynthesis. In terms of biological role, catalyzes the condensation reaction of fatty acid synthesis by the addition to an acyl acceptor of two carbons from malonyl-ACP. Catalyzes the first condensation reaction which initiates fatty acid synthesis and may therefore play a role in governing the total rate of fatty acid production. Possesses both acetoacetyl-ACP synthase and acetyl transacylase activities. Its substrate specificity determines the biosynthesis of branched-chain and/or straight-chain of fatty acids. The polypeptide is Beta-ketoacyl-[acyl-carrier-protein] synthase III (Ruegeria sp. (strain TM1040) (Silicibacter sp.)).